The primary structure comprises 147 residues: Small ribosomal subunit protein eS19 (147 aa).

Belongs to the eukaryotic ribosomal protein eS19 family. In terms of assembly, part of the 30S ribosomal subunit.

Functionally, may be involved in maturation of the 30S ribosomal subunit. This chain is Small ribosomal subunit protein eS19, found in Archaeoglobus fulgidus (strain ATCC 49558 / DSM 4304 / JCM 9628 / NBRC 100126 / VC-16).